A 313-amino-acid polypeptide reads, in one-letter code: Myeloma-overexpressed gene protein (313 aa).

Residues 107–129 are disordered; it reads ERNKGDKGAQTGAGLSQEAEDVD.

This chain is Myeloma-overexpressed gene protein (MYEOV), found in Homo sapiens (Human).